The chain runs to 116 residues: Ferredoxin-like protein in nif region (116 aa).

Residues 2–29 form the 4Fe-4S ferredoxin-type domain; sequence AYTITSQCISCKLCSSVCPTGAIKVAED. Iron-sulfur cluster is bound by residues cysteine 9, cysteine 12, cysteine 15, and cysteine 19.

This is Ferredoxin-like protein in nif region (fdxN) from Trichormus azollae (Anabaena azollae).